A 256-amino-acid polypeptide reads, in one-letter code: MLKKQDAIVLKSIDYGETNKIVTLFTKEDGKLAVLAKGAKKPNSRFAAVTQPFVYGSYLYFQGNGLPSLSQGEAVDSFKELQFDIVKSAYAAYITELVDKLTEERKPTFFLFDWLLLALRQINTGQDAEIIARIMDMKMLPLAGAKPELDCCACCRSETRDPVAFSVAYAGFLCSNCIHKDERAFPITLPFAKLFRVLYYVDLTKVGTISVKAETKRRLEWMIRTYYDEYVGVQLKARRFISQLDKMGGLSSDVDK.

The protein belongs to the RecO family.

Functionally, involved in DNA repair and RecF pathway recombination. In Shouchella clausii (strain KSM-K16) (Alkalihalobacillus clausii), this protein is DNA repair protein RecO.